A 459-amino-acid chain; its full sequence is uncharacterized protein (459 aa).

Residues 5 to 63 form the TRAM domain; sequence PVEEGQKFPLTIRRMGINGEGIGYFKKAVVFVPGAITGEEVVVEAVKVRDRFTEAKLNK. [4Fe-4S] cluster contacts are provided by cysteine 76, cysteine 82, cysteine 85, and cysteine 166. S-adenosyl-L-methionine-binding residues include glutamine 290, tyrosine 319, aspartate 340, and aspartate 388. Catalysis depends on cysteine 415, which acts as the Nucleophile.

Belongs to the class I-like SAM-binding methyltransferase superfamily. RNA M5U methyltransferase family.

This is an uncharacterized protein from Listeria monocytogenes serovar 1/2a (strain ATCC BAA-679 / EGD-e).